Consider the following 586-residue polypeptide: MDYLKTVVPSQLMAERGANLVVINPGSSNVRIGFASQDVPFNIPHCIARHITQQKDDTPRLSVRDKMLNCHATPSQNAERERAYDIIASLLKIPFLDEDMPSANQALPPKMGRVDALSSQQNKDDSKFTWTDVMDRSIKSSTPIVDKDADVDPLQRSTPDDTEPNSEENMYKEIIFGEDALKIPPSESYCLSHPIRRGHFNISQDYSLHQVLEDLRTIWNWILTEKLHINPRDRHLYSAILVLGETFDNREIKEMLSIVLCDLGFSTAVIHQEALAAAFGNGLSTSCVVNIGAQVTQVVCVEDGVALPHTALALPYGGDDISRCLLWVQRRHCTWPNFQTDPVNKPIDMLMLNKLKESYSQIRSGSFDAVSVVHSYEHEKSVGHQKTKLSALNVPPMGLLYPRVLVPEEYPPPPRSWFQDYDDMLEDTWQTSDSLYSSGNGGFGMWDNYPMFPTRLKKFDNIGLVEAIVSSILSTGRIELQRKLFCSIQLVGGTASTAGLAPVLEQRVLNTIPSNQPIEKAEVLQSRSYPLFVPWKGGVILGVLDIGRDAWIHREDWAKNGVHIGSGRKYRDSYFLQAQAMCYYNS.

The segment at 141–169 (STPIVDKDADVDPLQRSTPDDTEPNSEEN) is disordered.

Belongs to the actin family. ARP8 subfamily.

The chain is Actin-related protein 9 (ARP9) from Oryza sativa subsp. japonica (Rice).